Consider the following 362-residue polypeptide: Leucoanthocyanidin dioxygenase (362 aa).

Residues 211–313 form the Fe2OG dioxygenase domain; the sequence is MEELLLQKKI…RISWAVFCEP (103 aa). The Fe cation site is built by His238, Asp240, and His294.

It belongs to the iron/ascorbate-dependent oxidoreductase family. Requires Fe cation as cofactor. L-ascorbate is required as a cofactor.

The catalysed reaction is a (2R,3S,4S)-leucoanthocyanidin + 2-oxoglutarate + O2 = a 4-H-anthocyanidin with a 3-hydroxy group + succinate + CO2 + 2 H2O. It participates in pigment biosynthesis; anthocyanin biosynthesis. Functionally, oxidation of leucoanthocyanidins into anthocyanidins. In Vitis vinifera (Grape), this protein is Leucoanthocyanidin dioxygenase.